The chain runs to 517 residues: Aldehyde dehydrogenase X, mitochondrial (517 aa).

The N-terminal 17 residues, Met-1 to Ala-17, are a transit peptide targeting the mitochondrion. At Lys-51 the chain carries N6-acetyllysine. N6-acetyllysine; alternate is present on Lys-52. The residue at position 52 (Lys-52) is an N6-succinyllysine; alternate. An N6-succinyllysine modification is found at Lys-81. NAD(+) is bound at residue Gly-262–Gly-267. Glu-285 acts as the Proton acceptor in catalysis. The active-site Nucleophile is the Cys-319. Residues Lys-364, Lys-383, Lys-399, Lys-414, and Lys-426 each carry the N6-acetyllysine; alternate modification. 5 positions are modified to N6-succinyllysine; alternate: Lys-364, Lys-383, Lys-399, Lys-414, and Lys-426. Lys-429 is modified (N6-acetyllysine).

Belongs to the aldehyde dehydrogenase family. Homotetramer. Liver, testis and to a lesser extent in brain.

The protein localises to the mitochondrion matrix. The catalysed reaction is an aldehyde + NAD(+) + H2O = a carboxylate + NADH + 2 H(+). Its pathway is alcohol metabolism; ethanol degradation; acetate from ethanol: step 2/2. Functionally, ALDHs play a major role in the detoxification of alcohol-derived acetaldehyde. They are involved in the metabolism of corticosteroids, biogenic amines, neurotransmitters, and lipid peroxidation. The protein is Aldehyde dehydrogenase X, mitochondrial (ALDH1B1) of Homo sapiens (Human).